Here is a 345-residue protein sequence, read N- to C-terminus: Tubulin-folding cofactor C (345 aa).

Position 1 is an N-acetylmethionine (Met1). Polar residues predominate over residues 1-10 (MEDDGQSSVA). Residues 1–83 (MEDDGQSSVA…SRLASSSTDS (83 aa)) are disordered. The segment covering 23-39 (DMLERLSARHQARKSDS) has biased composition (basic and acidic residues). Residues 40 to 55 (PDSSSSSSSTLESTSS) show a composition bias toward low complexity. Residues 61 to 73 (SDSKRSIESRIAE) show a composition bias toward basic and acidic residues. Over residues 74–83 (SRLASSSTDS) the composition is skewed to low complexity. The 150-residue stretch at 169–318 (PPKLVPVRDS…NWANVDDFRW (150 aa)) folds into the C-CAP/cofactor C-like domain.

The protein belongs to the TBCC family. Supercomplex made of cofactors A to E. Cofactors A and D function by capturing and stabilizing tubulin in a quasi-native conformation. Cofactor E binds to the cofactor D-tubulin complex; interaction with cofactor C then causes the release of tubulin polypeptides that are committed to the native state. Ubiquitously expressed (at protein level). Present in leaves, roots, flowers, and stems.

It is found in the cytoplasm. In terms of biological role, essential tubulin-folding protein involved in the final step of the tubulin folding pathway. Required for continuous microtubule cytoskeleton organization, mitotic division, cytokinesis, and to couple cell cycle progression to cell division in embryos and endosperms. Not essential for cell viability. Binds probably to the multimeric supercomplex, stimulating GTP hydrolysis by the bound beta-tubulin and the release of the alpha-/beta-tubulin heterodimer. The protein is Tubulin-folding cofactor C (TFCC) of Arabidopsis thaliana (Mouse-ear cress).